Consider the following 92-residue polypeptide: Large ribosomal subunit protein uL23c (92 aa).

It belongs to the universal ribosomal protein uL23 family. As to quaternary structure, part of the 50S ribosomal subunit.

The protein resides in the plastid. The protein localises to the chloroplast. Binds to 23S rRNA. In Mesostigma viride (Green alga), this protein is Large ribosomal subunit protein uL23c (rpl23).